A 334-amino-acid polypeptide reads, in one-letter code: Fructose-1,6-bisphosphatase class 1 (334 aa).

Mg(2+)-binding residues include E89, D112, L114, and D115. Substrate-binding positions include 115–118, N208, Y241, 259–261, and K271; these read DGSS and YLY. Residue E277 participates in Mg(2+) binding.

Belongs to the FBPase class 1 family. In terms of assembly, homotetramer. Mg(2+) is required as a cofactor.

The protein localises to the cytoplasm. It carries out the reaction beta-D-fructose 1,6-bisphosphate + H2O = beta-D-fructose 6-phosphate + phosphate. It participates in carbohydrate biosynthesis; gluconeogenesis. The sequence is that of Fructose-1,6-bisphosphatase class 1 from Pectobacterium atrosepticum (strain SCRI 1043 / ATCC BAA-672) (Erwinia carotovora subsp. atroseptica).